Reading from the N-terminus, the 446-residue chain is tRNA-2-methylthio-N(6)-dimethylallyladenosine synthase (446 aa).

The MTTase N-terminal domain maps to 3 to 120 (KKIYIKTFGC…LPEMLKQRRS (118 aa)). 6 residues coordinate [4Fe-4S] cluster: C12, C49, C83, C157, C161, and C164. The Radical SAM core domain occupies 143-375 (KVEGATAFVS…QAVIDQNTRR (233 aa)). Residues 378-444 (DEMVGSVQRI…AYTLRGEIVV (67 aa)) form the TRAM domain.

It belongs to the methylthiotransferase family. MiaB subfamily. Monomer. [4Fe-4S] cluster serves as cofactor.

Its subcellular location is the cytoplasm. It carries out the reaction N(6)-dimethylallyladenosine(37) in tRNA + (sulfur carrier)-SH + AH2 + 2 S-adenosyl-L-methionine = 2-methylsulfanyl-N(6)-dimethylallyladenosine(37) in tRNA + (sulfur carrier)-H + 5'-deoxyadenosine + L-methionine + A + S-adenosyl-L-homocysteine + 2 H(+). Functionally, catalyzes the methylthiolation of N6-(dimethylallyl)adenosine (i(6)A), leading to the formation of 2-methylthio-N6-(dimethylallyl)adenosine (ms(2)i(6)A) at position 37 in tRNAs that read codons beginning with uridine. This chain is tRNA-2-methylthio-N(6)-dimethylallyladenosine synthase, found in Herminiimonas arsenicoxydans.